A 288-amino-acid chain; its full sequence is Alpha/beta hydrolase domain-containing protein 17B (288 aa).

Active-site charge relay system residues include Ser-170, Asp-235, and His-264. Residue Ser-282 is modified to Phosphoserine.

It belongs to the AB hydrolase superfamily. ABHD17 family. In terms of processing, palmitoylated on cysteine residues located in a cysteine cluster at the N-terminus which promotes membrane localization. Palmitoylation is required for post-synaptic localization and for depalmitoylating activity towards DLG4/PSD95.

The protein resides in the cell membrane. Its subcellular location is the recycling endosome membrane. The protein localises to the cell projection. It is found in the dendritic spine. It localises to the postsynaptic density membrane. The enzyme catalyses S-hexadecanoyl-L-cysteinyl-[protein] + H2O = L-cysteinyl-[protein] + hexadecanoate + H(+). Inhibited by palmostatin-B. Functionally, hydrolyzes fatty acids from S-acylated cysteine residues in proteins. Has depalmitoylating activity towards DLG4/PSD95. Has depalmitoylating activity towards GAP43. Has depalmitoylating activity towards MAP6. Has depalmitoylating activity towards NRAS. The protein is Alpha/beta hydrolase domain-containing protein 17B of Homo sapiens (Human).